Consider the following 588-residue polypeptide: Adenine deaminase (588 aa).

It belongs to the metallo-dependent hydrolases superfamily. Adenine deaminase family. In terms of assembly, homodimer. Mn(2+) serves as cofactor.

The enzyme catalyses adenine + H2O + H(+) = hypoxanthine + NH4(+). This chain is Adenine deaminase, found in Escherichia coli (strain 55989 / EAEC).